Reading from the N-terminus, the 342-residue chain is Phosphate acyltransferase (342 aa).

It belongs to the PlsX family. In terms of assembly, homodimer. Probably interacts with PlsY.

The protein resides in the cytoplasm. The enzyme catalyses a fatty acyl-[ACP] + phosphate = an acyl phosphate + holo-[ACP]. It participates in lipid metabolism; phospholipid metabolism. In terms of biological role, catalyzes the reversible formation of acyl-phosphate (acyl-PO(4)) from acyl-[acyl-carrier-protein] (acyl-ACP). This enzyme utilizes acyl-ACP as fatty acyl donor, but not acyl-CoA. This chain is Phosphate acyltransferase, found in Shewanella baltica (strain OS155 / ATCC BAA-1091).